A 159-amino-acid chain; its full sequence is ATP synthase subunit b 1 (159 aa).

A helical transmembrane segment spans residues phenylalanine 5–alanine 25.

The protein belongs to the ATPase B chain family. F-type ATPases have 2 components, F(1) - the catalytic core - and F(0) - the membrane proton channel. F(1) has five subunits: alpha(3), beta(3), gamma(1), delta(1), epsilon(1). F(0) has three main subunits: a(1), b(2) and c(10-14). The alpha and beta chains form an alternating ring which encloses part of the gamma chain. F(1) is attached to F(0) by a central stalk formed by the gamma and epsilon chains, while a peripheral stalk is formed by the delta and b chains.

The protein resides in the cell inner membrane. Functionally, f(1)F(0) ATP synthase produces ATP from ADP in the presence of a proton or sodium gradient. F-type ATPases consist of two structural domains, F(1) containing the extramembraneous catalytic core and F(0) containing the membrane proton channel, linked together by a central stalk and a peripheral stalk. During catalysis, ATP synthesis in the catalytic domain of F(1) is coupled via a rotary mechanism of the central stalk subunits to proton translocation. In terms of biological role, component of the F(0) channel, it forms part of the peripheral stalk, linking F(1) to F(0). This chain is ATP synthase subunit b 1, found in Bartonella bacilliformis (strain ATCC 35685 / KC583 / Herrer 020/F12,63).